The primary structure comprises 201 residues: Putative ferritin heavy polypeptide-like 19 (201 aa).

Positions 1-123 (MAFYFDQDDA…GYLSNLHKMG (123 aa)) constitute a Ferritin-like diiron domain.

This sequence belongs to the ferritin family.

The protein is Putative ferritin heavy polypeptide-like 19 (FTH1P19) of Homo sapiens (Human).